A 265-amino-acid chain; its full sequence is Tyrosine protein kinase-interacting protein (265 aa).

Over residues 1–14 the composition is skewed to acidic residues; that stretch reads MANEGEEIELTEFP. The disordered stretch occupies residues 1-49; sequence MANEGEEIELTEFPETEKERKDEEKLSSCSEETTDTSSSSSSDHVPAPI. The Cytoplasmic portion of the chain corresponds to 1-238; it reads MANEGEEIEL…LKRLENKVNA (238 aa). Residues 15–26 show a composition bias toward basic and acidic residues; that stretch reads ETEKERKDEEKL. Residues 27–43 are compositionally biased toward low complexity; the sequence is SSCSEETTDTSSSSSSD. Y123 carries the phosphotyrosine; by host LCK modification. At Y136 the chain carries Phosphotyrosine; by host. A CSKH/LBD2 region spans residues 155-164; that stretch reads EDLQSFLEKY. A disordered region spans residues 172-192; that stretch reads KRDLSATWDPGMPTPALPPRP. Residues 183–192 form an SH3B/LBD1 region; sequence MPTPALPPRP. Residues 183–192 show a composition bias toward pro residues; that stretch reads MPTPALPPRP. The SH3 binding stretch occupies residues 225 to 234; the sequence is IVKDLKRLEN. Residues 239-259 form a helical membrane-spanning segment; sequence IICLVVVILAVLLLVTVLSIL. At 260–265 the chain is on the extracellular side; sequence HIGMKS.

As to quaternary structure, binds host LCK, human WDR48 and human NXF1/TAP. Forms a complex with activated LCK and STAT1 and STAT3. Phosphorylation on Tyr-123 acts as a docking site for the recruitment of STATs 1 and 3.

The protein localises to the host cell membrane. Plays a critical role in virus induced T-cell transformation. Binds to T-cell-specific tyrosine kinase LCK SH2 and SH3 domains, thereby activating its kinase activity. Once phosphorylated by host LCK, forms a complex with at least STAT 1 and 3, resulting on the phosphorylation of STAT3 and presumably STAT1, and their migration into the nucleus to induce transcription of target genes. Stimulates host ILF3/NF-AT-90 activity. Association with host NXF1/TAP transduces the signal up-regulating surface expression of adhesion molecules as well as activating NF-kappa-B activity. Acts synergistically with StpC to stimulate NF-kappa-B activity and interleukin-2 gene expression. Activation of NF-kappa-B protects lymphocytes from apoptosis, thereby facilitating viral induced cell transformation. May cause down-regulation of host LCK and cell apoptosis when stably overexpressed ex vivo. Interaction with WDR48 induce degradation of T-cell receptor in a lysosome-dependent fashion, when both proteins are overexpressed. The biological effect of this interaction remains controversial since no T-cell receptor degradation is observed in infected cells. This is Tyrosine protein kinase-interacting protein from Saimiriine herpesvirus 2 (strain 484) (SaHV-2).